Here is a 1073-residue protein sequence, read N- to C-terminus: Semaphorin-6D (1073 aa).

The first 20 residues, 1–20 (MGFLLLWFCVLFLLVSRLRA), serve as a signal peptide directing secretion. The Extracellular segment spans residues 21 to 662 (VSFPEDDEPL…GESNQMVHMN (642 aa)). The 486-residue stretch at 27-512 (DEPLNTVDYH…FSSCVVRIPL (486 aa)) folds into the Sema domain. N-linked (GlcNAc...) asparagine glycosylation occurs at N51. 4 disulfides stabilise this stretch: C108-C118, C136-C145, C259-C370, and C284-C329. An N-linked (GlcNAc...) asparagine glycan is attached at N283. Residues N435 and N461 are each glycosylated (N-linked (GlcNAc...) asparagine). Intrachain disulfides connect C477/C506, C515/C533, C521/C568, and C525/C541. Residues 514-569 (RCERYGSCKKSCIASRDPYCGWLSQGVCERVTLGMLPGGYEQDTEYGNTAHLGDCH) form the PSI domain. N-linked (GlcNAc...) asparagine glycosylation is present at N631. Residues 663-683 (VLITCVFAAFVLGAFIAGVAV) form a helical membrane-spanning segment. At 684–1073 (YCYRDMFVRK…SVRPLNKYTY (390 aa)) the chain is on the cytoplasmic side. S723, S734, and S744 each carry phosphoserine. Disordered stretches follow at residues 745-825 (RKEL…GHIP), 839-876 (TSFS…VDSR), 919-986 (PPKV…SPNG), and 1021-1073 (LQPS…KYTY). T773 is subject to Phosphothreonine. Residues 790–806 (SHSEKAHSHGASRKEHP) show a composition bias toward basic and acidic residues. Phosphoserine occurs at positions 931, 957, and 983. The segment covering 931-942 (SPPSTLPRNSPT) has biased composition (polar residues). 2 stretches are compositionally biased toward polar residues: residues 1021–1037 (LQPS…NGTL) and 1059–1073 (VPQT…KYTY).

The protein belongs to the semaphorin family. Expressed in brain and lung.

The protein resides in the cell membrane. Its function is as follows. Shows growth cone collapsing activity on dorsal root ganglion (DRG) neurons in vitro. May be a stop signal for the DRG neurons in their target areas, and possibly also for other neurons. May also be involved in the maintenance and remodeling of neuronal connections. Ligand of TREM2 with PLXNA1 as coreceptor in dendritic cells, plays a role in the generation of immune responses and skeletal homeostasis. This Mus musculus (Mouse) protein is Semaphorin-6D (Sema6d).